Consider the following 705-residue polypeptide: Elongation factor G (705 aa).

The region spanning 7 to 287 is the tr-type G domain; it reads HLTRNIGIMA…YVCAFLPSPL (281 aa). Residues 16 to 23, 84 to 88, and 138 to 141 each bind GTP; these read AHIDAGKT, DTPGH, and NKMD. The disordered stretch occupies residues 293-312; sequence VGTNPTTGAEEDRKPSEDEK. Residues 302–312 are compositionally biased toward basic and acidic residues; sequence EEDRKPSEDEK.

It belongs to the TRAFAC class translation factor GTPase superfamily. Classic translation factor GTPase family. EF-G/EF-2 subfamily.

The protein resides in the cytoplasm. Functionally, catalyzes the GTP-dependent ribosomal translocation step during translation elongation. During this step, the ribosome changes from the pre-translocational (PRE) to the post-translocational (POST) state as the newly formed A-site-bound peptidyl-tRNA and P-site-bound deacylated tRNA move to the P and E sites, respectively. Catalyzes the coordinated movement of the two tRNA molecules, the mRNA and conformational changes in the ribosome. In Phocaeicola vulgatus (strain ATCC 8482 / DSM 1447 / JCM 5826 / CCUG 4940 / NBRC 14291 / NCTC 11154) (Bacteroides vulgatus), this protein is Elongation factor G.